The following is a 499-amino-acid chain: Thioredoxin reductase 1, cytoplasmic (499 aa).

FAD contacts are provided by residues 22–23 (SG), 42–43 (DF), 58–59 (TC), and 63–67 (SCIPK). A disulfide bridge links C59 with C64. N6-succinyllysine is present on K68. Y131 carries the phosphotyrosine modification. FAD is bound by residues 131-132 (YG) and T161. NADP(+) contacts are provided by residues R166, 198–204 (ASYVALE), 221–222 (RS), R226, 226–228 (RGF), 292–293 (GR), and K315. Residue Y200 coordinates FAD. Residues D334, 341–343 (ELT), and H472 each bind FAD. Residue E341 participates in NADP(+) binding. The active-site Proton acceptor is the H472. Positions 497 to 498 (CU) form a cross-link, cysteinyl-selenocysteine (Cys-Sec). Position 498 (U498) is a non-standard amino acid, selenocysteine.

It belongs to the class-I pyridine nucleotide-disulfide oxidoreductase family. Homodimer. FAD serves as cofactor. ISGylated.

The protein localises to the cytoplasm. The enzyme catalyses [thioredoxin]-dithiol + NADP(+) = [thioredoxin]-disulfide + NADPH + H(+). It carries out the reaction H2O2 + NADPH + H(+) = NADP(+) + 2 H2O. Its function is as follows. Reduces disulfideprotein thioredoxin (Trx) to its dithiol-containing form. Homodimeric flavoprotein involved in the regulation of cellular redox reactions, growth and differentiation. Contains a selenocysteine residue at the C-terminal active site that is essential for catalysis. Also has reductase activity on hydrogen peroxide (H2O2). This is Thioredoxin reductase 1, cytoplasmic (TXNRD1) from Sus scrofa (Pig).